The following is a 97-amino-acid chain: MTILASICKLGNTKSTSSSIGSSYSSAVSFGSNSVSCGECGGDGPSFPNASPRTGVKAGVNVDGLLGAIGKTVNGMLISPNGGGGGMGMGGGSCGCN.

It belongs to the hssA/B family.

This chain is HssA/B-like protein 27 (hssl27), found in Dictyostelium discoideum (Social amoeba).